The chain runs to 173 residues: Shikimate kinase (173 aa).

Residue 14-19 (GAGKST) participates in ATP binding. Ser18 provides a ligand contact to Mg(2+). 3 residues coordinate substrate: Asp36, Arg60, and Gly82. Arg120 is an ATP binding site. A substrate-binding site is contributed by Arg140. Gln157 serves as a coordination point for ATP.

It belongs to the shikimate kinase family. In terms of assembly, monomer. It depends on Mg(2+) as a cofactor.

The protein localises to the cytoplasm. The catalysed reaction is shikimate + ATP = 3-phosphoshikimate + ADP + H(+). It functions in the pathway metabolic intermediate biosynthesis; chorismate biosynthesis; chorismate from D-erythrose 4-phosphate and phosphoenolpyruvate: step 5/7. Functionally, catalyzes the specific phosphorylation of the 3-hydroxyl group of shikimic acid using ATP as a cosubstrate. This is Shikimate kinase from Buchnera aphidicola subsp. Schizaphis graminum (strain Sg).